Reading from the N-terminus, the 75-residue chain is Endogenous retrovirus group K member 5 Np9 protein (75 aa).

The interval Thr22–Lys43 is disordered. Residues Thr32 to Lys43 show a composition bias toward basic and acidic residues.

The protein resides in the nucleus. In terms of biological role, may possess a function in tumorigenesis. In Homo sapiens (Human), this protein is Endogenous retrovirus group K member 5 Np9 protein (ERVK-5).